We begin with the raw amino-acid sequence, 67 residues long: Large ribosomal subunit protein bL35 (67 aa).

Positions 1–20 are disordered; sequence MPKLKTKSGAKKRFVPKKSG.

Belongs to the bacterial ribosomal protein bL35 family.

This chain is Large ribosomal subunit protein bL35, found in Anaeromyxobacter dehalogenans (strain 2CP-C).